An 877-amino-acid polypeptide reads, in one-letter code: MQAQAIRQAFLEYFVEQGHQIVPSSPLIPRNDPTLLFTNAGMVPFKDVFLGLETRPYRRAVSSQRCMRAGGKHNDLENVGYTARHHTFFEMLGNFSFGDYFKREVIGFAWRFLTERLGLPPEKLWITVYEEDDEAADIWMNEIGVDPARLSRCGEKDNFWSMGDTGPCGPCSEIFYDHGPHIPGGPPGSPEEDGDRYIEIWNLVFMQFDRDSSGTLTPLPKPSVDTGMGLERLAAVLQGVHNNYDTDLFKPLIAAAAAISGKTYGSDAATDISLRVLADHIRACSFLITDGVLPANEGRGYVLRRIIRRAVRHGRKLGMETVFFHQLVAPLVAEMGSAFPELTRAQREVERALEREETRFRETLERGLSLLEEAIADLAAGAAIPGEIIFRLADTFGFPVDLTADIARERDLIMDMEGYEAAMADERSPLPCRLGGSGEVKTERVYHDLAMRLPVTEFTGYSTCADEGKVVALIRDGEEVAFLEAGDMGVVILDRTPFYGESGGQAGDRGELQSNDALFAVTDTQKPMGHLHVHLGRVESGRLQIGDMVVASVDEVARRATAAHHSATHLLHAALRNILGSHVQQKGSLVNPERLRFDFSHPEPVTAAQLREIERVVNAAIRNNVGAETRILPVAEAQALGAMALFGEKYGDEVRVVRMGDFSMELCGGTHVEALGDIGVFKILSESGVAAGIRRIEAVTGAVALEAIQRDEERLQAAAGLLKVAPAELDQRLAQTLERLRQLEKELEKVKRDEAVRAGAGLAAEAEDVGGVPVLIRRLEGMDGKALRDALDRLRSQLPDGVIVLAGVEREKVALIAGVGKGLTGRVHAGELVNTVAQPLGGKGGGRPELAQAGAGNPAALDAALNAARDWVKGKLG.

Positions 565, 569, 667, and 671 each coordinate Zn(2+).

Belongs to the class-II aminoacyl-tRNA synthetase family. Zn(2+) is required as a cofactor.

It is found in the cytoplasm. It carries out the reaction tRNA(Ala) + L-alanine + ATP = L-alanyl-tRNA(Ala) + AMP + diphosphate. In terms of biological role, catalyzes the attachment of alanine to tRNA(Ala) in a two-step reaction: alanine is first activated by ATP to form Ala-AMP and then transferred to the acceptor end of tRNA(Ala). Also edits incorrectly charged Ser-tRNA(Ala) and Gly-tRNA(Ala) via its editing domain. This chain is Alanine--tRNA ligase, found in Acidithiobacillus ferridurans.